We begin with the raw amino-acid sequence, 329 residues long: Nicotianamine synthase 8 (329 aa).

The protein belongs to the nicotianamine synthase (NAS)-like family. Homotrimer.

It carries out the reaction 3 S-adenosyl-L-methionine = nicotianamine + 3 S-methyl-5'-thioadenosine + 3 H(+). Functionally, synthesizes nicotianamine, a polyamine that is the first intermediate in the synthesis of the phytosiderophores of the mugineic acid type found in gramineae which serve as a sensor for the physiological iron status within the plant, and/or might be involved in the transport of iron. The sequence is that of Nicotianamine synthase 8 (NAS8) from Hordeum vulgare (Barley).